Here is a 380-residue protein sequence, read N- to C-terminus: Outer mitochondrial transmembrane helix translocase (380 aa).

Residues Met-1 to Glu-18 are Mitochondrial intermembrane-facing. Residues Val-19–Ile-37 form a helical membrane-spanning segment. Residues Lys-38–Asp-380 lie on the Cytoplasmic side of the membrane. Gly-136–Thr-143 serves as a coordination point for ATP.

The protein belongs to the AAA ATPase family. MSP1 subfamily.

The protein resides in the mitochondrion outer membrane. The protein localises to the peroxisome membrane. It is found in the postsynaptic cell membrane. The catalysed reaction is [protein]-with a C-terminal TM segment(out) + ATP + H2O = [protein]-with a C-terminal TM segment(in) + ADP + phosphate + H(+). Functionally, outer mitochondrial translocase required to remove mislocalized tail-anchored transmembrane proteins on mitochondria. Specifically recognizes and binds tail-anchored transmembrane proteins: acts as a dislocase that mediates the ATP-dependent extraction of mistargeted tail-anchored transmembrane proteins from the mitochondrion outer membrane. Also plays a critical role in regulating the surface expression of AMPA receptors (AMPAR), thereby regulating synaptic plasticity and learning and memory. This chain is Outer mitochondrial transmembrane helix translocase, found in Danio rerio (Zebrafish).